The chain runs to 687 residues: Glycine--tRNA ligase beta subunit (687 aa).

This sequence belongs to the class-II aminoacyl-tRNA synthetase family. As to quaternary structure, tetramer of two alpha and two beta subunits.

It is found in the cytoplasm. It carries out the reaction tRNA(Gly) + glycine + ATP = glycyl-tRNA(Gly) + AMP + diphosphate. In Ruegeria sp. (strain TM1040) (Silicibacter sp.), this protein is Glycine--tRNA ligase beta subunit.